A 430-amino-acid chain; its full sequence is Putative aspergillopepsin A-like aspartic endopeptidase MCYG_07979 (430 aa).

Positions 1–17 are cleaved as a signal peptide; sequence MHLSSLLVAVLLPLALS. Positions 18 to 87 are cleaved as a propeptide — activation peptide; the sequence is KPTPRKKPGS…SKIAGGAPGA (70 aa). The disordered stretch occupies residues 59–105; the sequence is STQGMDGYRPEPISRFQGNSKIAGGAPGAKDDGKDEKGEVENNPTSH. The span at 87 to 98 shows a compositional bias: basic and acidic residues; it reads AKDDGKDEKGEV. Residues 109 to 427 form the Peptidase A1 domain; the sequence is FLSPVTIGGQ…DYRGPSVSLA (319 aa). D125 is an active-site residue. An N-linked (GlcNAc...) asparagine glycan is attached at N306. The active site involves D314. N352 carries an N-linked (GlcNAc...) asparagine glycan.

It belongs to the peptidase A1 family.

Its subcellular location is the secreted. The sequence is that of Putative aspergillopepsin A-like aspartic endopeptidase MCYG_07979 from Arthroderma otae (strain ATCC MYA-4605 / CBS 113480) (Microsporum canis).